Reading from the N-terminus, the 432-residue chain is Adenylosuccinate synthetase (432 aa).

GTP is bound by residues 11–17 and 39–41; these read GDEGKGK and GHT. Catalysis depends on aspartate 12, which acts as the Proton acceptor. Residues aspartate 12 and glycine 39 each coordinate Mg(2+). IMP-binding positions include 12 to 15, 37 to 40, threonine 134, arginine 148, asparagine 230, threonine 245, and arginine 309; these read DEGK and NAGH. The Proton donor role is filled by histidine 40. A substrate-binding site is contributed by 305–311; the sequence is VTTGRKR. Residues arginine 311, 337–339, and 419–421 contribute to the GTP site; these read KLD and GTG.

It belongs to the adenylosuccinate synthetase family. Homodimer. Requires Mg(2+) as cofactor.

It localises to the cytoplasm. It carries out the reaction IMP + L-aspartate + GTP = N(6)-(1,2-dicarboxyethyl)-AMP + GDP + phosphate + 2 H(+). It participates in purine metabolism; AMP biosynthesis via de novo pathway; AMP from IMP: step 1/2. Its function is as follows. Plays an important role in the de novo pathway and in the salvage pathway of purine nucleotide biosynthesis. Catalyzes the first committed step in the biosynthesis of AMP from IMP. The chain is Adenylosuccinate synthetase from Kluyveromyces lactis (strain ATCC 8585 / CBS 2359 / DSM 70799 / NBRC 1267 / NRRL Y-1140 / WM37) (Yeast).